The chain runs to 48 residues: ATP synthase protein 8 (48 aa).

Residues 4–24 (LVPFFFVNQVVFAFIVLTVLI) traverse the membrane as a helical segment.

Belongs to the ATPase protein 8 family. F-type ATPases have 2 components, CF(1) - the catalytic core - and CF(0) - the membrane proton channel.

Its subcellular location is the mitochondrion membrane. Mitochondrial membrane ATP synthase (F(1)F(0) ATP synthase or Complex V) produces ATP from ADP in the presence of a proton gradient across the membrane which is generated by electron transport complexes of the respiratory chain. F-type ATPases consist of two structural domains, F(1) - containing the extramembraneous catalytic core and F(0) - containing the membrane proton channel, linked together by a central stalk and a peripheral stalk. During catalysis, ATP synthesis in the catalytic domain of F(1) is coupled via a rotary mechanism of the central stalk subunits to proton translocation. Part of the complex F(0) domain. Minor subunit located with subunit a in the membrane. The chain is ATP synthase protein 8 (atp8) from Emericella nidulans (Aspergillus nidulans).